Reading from the N-terminus, the 120-residue chain is Secreted RxLR effector protein RXLR-C26 (120 aa).

The N-terminal stretch at 1 to 29 (MTGILCFPPFARFFMLLSGCAWLAGVSSG) is a signal peptide. A RxLR-dEER motif is present at residues 57–77 (RNLRGHINSAIIEANDTSEER). N-linked (GlcNAc...) asparagine glycosylation is present at N71.

Belongs to the RxLR effector family.

It is found in the secreted. Its subcellular location is the host cytoplasm. The protein resides in the host nucleus. Its function is as follows. Secreted effector that does not suppress pattern-triggered immunity (PTI) in plant host. The protein is Secreted RxLR effector protein RXLR-C26 of Plasmopara halstedii (Downy mildew of sunflower).